We begin with the raw amino-acid sequence, 301 residues long: 2-methylisocitrate lyase (301 aa).

53–55 provides a ligand contact to substrate; the sequence is SGA. Residues aspartate 92 and aspartate 94 each contribute to the Mg(2+) site. Residues 129 to 130, arginine 162, glutamate 192, 214 to 216, arginine 245, and arginine 274 each bind substrate; these read CG and NMT.

Belongs to the isocitrate lyase/PEP mutase superfamily. Methylisocitrate lyase family. Mg(2+) is required as a cofactor.

The catalysed reaction is 3-hydroxybutane-1,2,3-tricarboxylate = pyruvate + succinate. Involved in the methylcitric acid cycle. Catalyzes the cleavage of 2-methylisocitrate to yield pyruvate and succinate. This Bacillus subtilis (strain 168) protein is 2-methylisocitrate lyase.